Consider the following 435-residue polypeptide: Cyclic GMP-AMP synthase-like receptor (435 aa).

ATP-binding positions include Ser-70 and 82–84; that span reads EFD. Mg(2+)-binding residues include Glu-82, Asp-84, and Asp-209. GTP is bound at residue Asp-209. ATP is bound by residues Lys-286 and 300–304; that span reads SYYVK. Residues Leu-311, Asp-312, and Asp-317 each contribute to the Mn(2+) site.

Belongs to the mab-21 family. It depends on Mg(2+) as a cofactor. Requires Mn(2+) as cofactor.

It carries out the reaction GTP + ATP = 2',3'-cGAMP + 2 diphosphate. The enzyme catalyses GTP + ATP = pppGp(2'-5')A + diphosphate. It catalyses the reaction pppGp(2'-5')A = 2',3'-cGAMP + diphosphate. Functionally, nucleotidyltransferase that catalyzes the formation of cyclic GMP-AMP (2',3'-cGAMP) from ATP and GTP and plays a key role in innate immunity. Directly binds some unknown ligand, activating the nucleotidyltransferase activity, leading to synthesis of 2',3'-cGAMP, a second messenger that binds to and activates Sting, thereby triggering the immune response via activation of the NF-kappa-B transcription factor. The protein is Cyclic GMP-AMP synthase-like receptor of Ctenocephalides felis (Cat flea).